Consider the following 96-residue polypeptide: Copper-sensing transcriptional repressor RicR (96 aa).

Threonine 2 carries the N-acetylthreonine modification. Cu cation is bound by residues cysteine 38, histidine 63, and cysteine 67.

This sequence belongs to the CsoR family.

Its subcellular location is the cytoplasm. Its function is as follows. Under low copper conditions, represses the expression of lpqS, Rv2963, mymT, socA, socB, mmcO and its own expression. In the presence of copper, RicR dissociates from DNA, leading to the expression of the target genes. Members of the RicR regulon are important for copper resistance during infections and full virulence in a mouse model of infection. In Mycobacterium tuberculosis (strain ATCC 25618 / H37Rv), this protein is Copper-sensing transcriptional repressor RicR.